The sequence spans 92 residues: Putative protein IntG (92 aa).

It belongs to the 'phage' integrase family.

In Escherichia coli (strain K12), this protein is Putative protein IntG (intG).